Reading from the N-terminus, the 102-residue chain is Neuropeptide F (102 aa).

An N-terminal signal peptide occupies residues 1-29 (MSNTMRCILIVCVALTLIAAGCNVEASNS). Residues 30–32 (RPP) constitute a propeptide that is removed on maturation. Position 62 is a phenylalanine amide (F62). Positions 66–102 (GGPLMEMLRNRELENNMAKSINSGGELIRALDEEEVF) are excised as a propeptide.

This sequence belongs to the NPY family.

It is found in the secreted. Its function is as follows. An integral part of the sensory system that mediates food signaling, providing the neural basis for the regulation of food response; coordinates larval foraging and social behavior changes during development. May have a hormonal role in females. In Drosophila pseudoobscura pseudoobscura (Fruit fly), this protein is Neuropeptide F.